We begin with the raw amino-acid sequence, 506 residues long: Maturase K (506 aa).

The protein belongs to the intron maturase 2 family. MatK subfamily.

The protein localises to the plastid. It is found in the chloroplast. Usually encoded in the trnK tRNA gene intron. Probably assists in splicing its own and other chloroplast group II introns. The sequence is that of Maturase K from Rhododendron ferrugineum (Alpenrose).